The primary structure comprises 254 residues: Alcohol dehydrogenase 1 (254 aa).

10–33 (FVAGLGGIGFDTSREIVKSGPKNL) serves as a coordination point for NAD(+). Ser138 is a binding site for substrate. Tyr151 serves as the catalytic Proton acceptor.

The protein belongs to the short-chain dehydrogenases/reductases (SDR) family. In terms of assembly, homodimer.

The catalysed reaction is a primary alcohol + NAD(+) = an aldehyde + NADH + H(+). The enzyme catalyses a secondary alcohol + NAD(+) = a ketone + NADH + H(+). This is Alcohol dehydrogenase 1 (Adh1) from Drosophila navojoa (Fruit fly).